Here is a 465-residue protein sequence, read N- to C-terminus: UDP-N-acetylmuramate--L-alanine ligase (465 aa).

Residue 112 to 118 (GTHGKTT) coordinates ATP.

It belongs to the MurCDEF family.

Its subcellular location is the cytoplasm. It carries out the reaction UDP-N-acetyl-alpha-D-muramate + L-alanine + ATP = UDP-N-acetyl-alpha-D-muramoyl-L-alanine + ADP + phosphate + H(+). The protein operates within cell wall biogenesis; peptidoglycan biosynthesis. Cell wall formation. This Burkholderia lata (strain ATCC 17760 / DSM 23089 / LMG 22485 / NCIMB 9086 / R18194 / 383) protein is UDP-N-acetylmuramate--L-alanine ligase.